We begin with the raw amino-acid sequence, 144 residues long: PE family protein PE9 (144 aa).

Residues 1–87 (MSYMIATPAA…RTLTGGCGVF (87 aa)) form the PE domain. Residues 98–124 (AAEHRAAGAGRRQRRRRSGDGQWRLRQ) form a disordered region.

Belongs to the mycobacterial PE family. As to quaternary structure, forms a complex with PE10. The complex interacts with human TLR4.

It localises to the secreted. It is found in the cell wall. The protein resides in the cell surface. Together with PE10, induces macrophage apoptosis through human Toll-like receptor 4 (TLR4) signaling pathway. Interaction with TLR4 leads to increased levels of phospho-IRF-3, increase in the transcript levels of IFN-beta and pro-apoptotic genes, up-regulation of IL-10, down-regulation of IL-1b and enhanced levels of macrophage apoptosis. The protein is PE family protein PE9 of Mycobacterium tuberculosis (strain ATCC 25618 / H37Rv).